A 407-amino-acid polypeptide reads, in one-letter code: Arginine deiminase (407 aa).

C397 functions as the Amidino-cysteine intermediate in the catalytic mechanism.

It belongs to the arginine deiminase family.

The protein resides in the cytoplasm. The enzyme catalyses L-arginine + H2O = L-citrulline + NH4(+). It functions in the pathway amino-acid degradation; L-arginine degradation via ADI pathway; carbamoyl phosphate from L-arginine: step 1/2. The sequence is that of Arginine deiminase from Salmonella choleraesuis (strain SC-B67).